A 702-amino-acid polypeptide reads, in one-letter code: Methionine--tRNA ligase (702 aa).

The short motif at 23-33 is the 'HIGH' region element; it reads PYANGPLHLGH. Residues Cys154, Cys157, Cys167, and Cys170 each coordinate Zn(2+). The 'KMSKS' region signature appears at 341–345; it reads KMSKS. Lys344 contacts ATP. A disordered region spans residues 562-593; the sequence is LAPPPASAKQQNASMSNTAPPPTAEEPETTAP. The span at 569–578 shows a compositional bias: polar residues; sequence AKQQNASMSN. The tRNA-binding domain occupies 599-702; sequence DFAKLDLRIG…SSAQPGMPVR (104 aa).

This sequence belongs to the class-I aminoacyl-tRNA synthetase family. MetG type 1 subfamily. As to quaternary structure, homodimer. Requires Zn(2+) as cofactor.

It is found in the cytoplasm. The enzyme catalyses tRNA(Met) + L-methionine + ATP = L-methionyl-tRNA(Met) + AMP + diphosphate. In terms of biological role, is required not only for elongation of protein synthesis but also for the initiation of all mRNA translation through initiator tRNA(fMet) aminoacylation. The chain is Methionine--tRNA ligase from Xylella fastidiosa (strain M12).